The primary structure comprises 309 residues: NADH-cytochrome b5 reductase 1 (309 aa).

A helical membrane pass occupies residues 30 to 50 (FVPYAVALTAILAGLKLFTGG). The FAD-binding FR-type domain maps to 60-165 (TEFQEFVLKE…RGPKGAMVYT (106 aa)). FAD-binding positions include 145–160 (TTLKIGDTMKVRGPKG) and 171–208 (HIGMIAGGTGITPMLQIIKAVIRNRPRNGGNDTTKLDL).

It belongs to the flavoprotein pyridine nucleotide cytochrome reductase family. In terms of assembly, monomer. Component of the 2-(3-amino-3-carboxypropyl)histidine synthase complex composed of dph1, dph2, dph3 and a NADH-dependent reductase, predominantly cbr1. FAD is required as a cofactor.

The protein resides in the mitochondrion outer membrane. It catalyses the reaction 2 Fe(III)-[cytochrome b5] + NADH = 2 Fe(II)-[cytochrome b5] + NAD(+) + H(+). It carries out the reaction 2 Fe(3+)-[Dph3] + NADH = 2 Fe(2+)-[Dph3] + NAD(+) + H(+). The protein operates within protein modification; peptidyl-diphthamide biosynthesis. NADH-dependent reductase for dph3 and cytochrome b5. Required for the first step of diphthamide biosynthesis, a post-translational modification of histidine which occurs in elongation factor 2. Dph1 and dph2 transfer a 3-amino-3-carboxypropyl (ACP) group from S-adenosyl-L-methionine (SAM) to a histidine residue, the reaction is assisted by a reduction system comprising dph3 and a NADH-dependent reductase, predominantly cbr1. By reducing dph3, also involved in the formation of the tRNA wobble base modification mcm5s 2U (5-methoxycarbonylmethyl-2-thiouridine), mediated by the elongator complex. The cytochrome b5/NADH cytochrome b5 reductase electron transfer system supports the catalytic activity of several sterol biosynthetic enzymes. This is NADH-cytochrome b5 reductase 1 (cbr1) from Neosartorya fischeri (strain ATCC 1020 / DSM 3700 / CBS 544.65 / FGSC A1164 / JCM 1740 / NRRL 181 / WB 181) (Aspergillus fischerianus).